The sequence spans 139 residues: Putative nickel-responsive regulator (139 aa).

Residues His-79, His-90, His-92, and Cys-98 each contribute to the Ni(2+) site.

It belongs to the transcriptional regulatory CopG/NikR family. It depends on Ni(2+) as a cofactor.

Transcriptional regulator. This is Putative nickel-responsive regulator from Solidesulfovibrio magneticus (strain ATCC 700980 / DSM 13731 / RS-1) (Desulfovibrio magneticus).